The primary structure comprises 133 residues: Holo-[acyl-carrier-protein] synthase (133 aa).

Residues D8 and E57 each contribute to the Mg(2+) site.

Belongs to the P-Pant transferase superfamily. AcpS family. It depends on Mg(2+) as a cofactor.

The protein localises to the cytoplasm. It carries out the reaction apo-[ACP] + CoA = holo-[ACP] + adenosine 3',5'-bisphosphate + H(+). In terms of biological role, transfers the 4'-phosphopantetheine moiety from coenzyme A to a Ser of acyl-carrier-protein. The protein is Holo-[acyl-carrier-protein] synthase of Bartonella bacilliformis (strain ATCC 35685 / KC583 / Herrer 020/F12,63).